The following is a 115-amino-acid chain: uncharacterized protein (115 aa).

The MSP domain occupies 1–115; sequence MGVEISLDPP…ETVIKLSAAE (115 aa).

This is an uncharacterized protein from Caenorhabditis elegans.